A 120-amino-acid chain; its full sequence is Flagellar protein FliT (120 aa).

Residues 1–50 (MNDFISSLNNWQALYALSNTMLSLANSGQWDELIEQEVKYVTLVEAIARN) are required for homodimerization. Residues 59–97 (FQEKARELLTKVLANEAALKIKLQARMEELRVLIEQNGN) are fliD binding.

Belongs to the FliT family. As to quaternary structure, homodimer. Interacts with FliD and FlhC.

It is found in the cytoplasm. The protein resides in the cytosol. Its function is as follows. Dual-function protein that regulates the transcription of class 2 flagellar operons and that also acts as an export chaperone for the filament-capping protein FliD. As a transcriptional regulator, acts as an anti-FlhDC factor; it directly binds FlhC, thus inhibiting the binding of the FlhC/FlhD complex to class 2 promoters, resulting in decreased expression of class 2 flagellar operons. As a chaperone, effects FliD transition to the membrane by preventing its premature polymerization, and by directing it to the export apparatus. This Cronobacter sakazakii (strain ATCC BAA-894) (Enterobacter sakazakii) protein is Flagellar protein FliT.